A 250-amino-acid polypeptide reads, in one-letter code: 3-deoxy-manno-octulosonate cytidylyltransferase (250 aa).

The protein belongs to the KdsB family.

The protein resides in the cytoplasm. The catalysed reaction is 3-deoxy-alpha-D-manno-oct-2-ulosonate + CTP = CMP-3-deoxy-beta-D-manno-octulosonate + diphosphate. Its pathway is nucleotide-sugar biosynthesis; CMP-3-deoxy-D-manno-octulosonate biosynthesis; CMP-3-deoxy-D-manno-octulosonate from 3-deoxy-D-manno-octulosonate and CTP: step 1/1. It functions in the pathway bacterial outer membrane biogenesis; lipopolysaccharide biosynthesis. Activates KDO (a required 8-carbon sugar) for incorporation into bacterial lipopolysaccharide in Gram-negative bacteria. This is 3-deoxy-manno-octulosonate cytidylyltransferase from Syntrophobacter fumaroxidans (strain DSM 10017 / MPOB).